We begin with the raw amino-acid sequence, 237 residues long: Small ribosomal subunit protein uS2c (237 aa).

Belongs to the universal ribosomal protein uS2 family.

It is found in the plastid. The polypeptide is Small ribosomal subunit protein uS2c (rps2) (Epifagus virginiana (Beechdrops)).